The primary structure comprises 186 residues: Large ribosomal subunit protein uL15 (186 aa).

The disordered stretch occupies residues Met1–Val48. Gly residues predominate over residues Arg21–Asn35.

The protein belongs to the universal ribosomal protein uL15 family. Part of the 50S ribosomal subunit.

Its function is as follows. Binds to the 23S rRNA. The chain is Large ribosomal subunit protein uL15 from Chlorobaculum tepidum (strain ATCC 49652 / DSM 12025 / NBRC 103806 / TLS) (Chlorobium tepidum).